The sequence spans 157 residues: Cytochrome P450 monooxygenase atG (157 aa).

Cys97 is a binding site for heme.

It belongs to the cytochrome P450 family. It depends on heme as a cofactor.

Its pathway is secondary metabolite biosynthesis. Cytochrome P450 monooxygenase; part of the gene cluster that mediates the biosynthesis of terreic acid, a quinone epoxide inhibitor of Bruton's tyrosine kinase (BTK). The first step of the pathway is the synthesis of 6-methylsalicylic acid (6-MSA) by the 6-methylsalicylic acid synthase atX. In the biosynthesis of 6-MSA, atX utilizes one acetyl-CoA and three malonyl-CoAs as its substrates and catalyzes a series of programmed reactions including Claisen condensation, reduction, aldol cyclization, and the hydrolytic cleavage that yields 6-MSA. The 6-methylsalicylate 1-monooxygenase atA then catalyzes the decarboxylative hydroxylation of 6-MSA to 3-methylcatechol. The next step is the conversion of 3-methylcatechol to 3-methyl-1,2,4-benzenetriol by cytochrome P450 monooxygenase atE, which is enhanced by cytochrome P450 monooxygenase atG. Then, the epoxidase atD catalyzes the epoxidation and hydroxyl oxidation of 3-methyl-1,2,4-benzenetriol to terremutin. Lastly, GMC oxidoreductase atC oxidizes terremutin to terreic acid. The protein is Cytochrome P450 monooxygenase atG of Aspergillus terreus (strain NIH 2624 / FGSC A1156).